The chain runs to 162 residues: Protein cornichon homolog 2 (162 aa).

The Cytoplasmic portion of the chain corresponds to 1–10 (MAFTFAAFCY). Residues 11–31 (MLTLVLCASLIFFIIWHIIAF) form a helical membrane-spanning segment. Residues 32–72 (DDLRTDFKDPIEQGNPSRARERIKNVERVCCLLRKLVVPEY) lie on the Lumenal side of the membrane. A helical transmembrane segment spans residues 73–93 (CIHGLFCLMFMCAAEWVTLGL). The Cytoplasmic segment spans residues 94–138 (NIPLLFYHLWRYFHRPADGSEVMFDPVSIMNVDILNYCQKEAWCK). A helical membrane pass occupies residues 139–161 (LAFYLLSFFYYLYRVGATVRYVS). Position 162 (A162) is a topological domain, lumenal.

This sequence belongs to the cornichon family.

The protein resides in the membrane. Regulates the trafficking and gating properties of AMPA-selective glutamate receptors (AMPARs). This is Protein cornichon homolog 2 (cnih2) from Xenopus laevis (African clawed frog).